We begin with the raw amino-acid sequence, 433 residues long: Serine--tRNA ligase (433 aa).

L-serine is bound at residue 235–237; sequence TSE. 266–268 contributes to the ATP binding site; sequence RSE. E289 contributes to the L-serine binding site. Residue 353 to 356 coordinates ATP; it reads EISS. S388 contributes to the L-serine binding site.

It belongs to the class-II aminoacyl-tRNA synthetase family. Type-1 seryl-tRNA synthetase subfamily. Homodimer. The tRNA molecule binds across the dimer.

The protein localises to the cytoplasm. It catalyses the reaction tRNA(Ser) + L-serine + ATP = L-seryl-tRNA(Ser) + AMP + diphosphate + H(+). The enzyme catalyses tRNA(Sec) + L-serine + ATP = L-seryl-tRNA(Sec) + AMP + diphosphate + H(+). It functions in the pathway aminoacyl-tRNA biosynthesis; selenocysteinyl-tRNA(Sec) biosynthesis; L-seryl-tRNA(Sec) from L-serine and tRNA(Sec): step 1/1. In terms of biological role, catalyzes the attachment of serine to tRNA(Ser). Is also able to aminoacylate tRNA(Sec) with serine, to form the misacylated tRNA L-seryl-tRNA(Sec), which will be further converted into selenocysteinyl-tRNA(Sec). The sequence is that of Serine--tRNA ligase from Burkholderia thailandensis (strain ATCC 700388 / DSM 13276 / CCUG 48851 / CIP 106301 / E264).